Here is a 292-residue protein sequence, read N- to C-terminus: uncharacterized protein (292 aa).

Residues 17 to 37 (SMDMFFFLFIFLLFIYPEMMM) traverse the membrane as a helical segment.

The protein to M.jannaschii MJ0137.

It is found in the membrane. This is an uncharacterized protein from Methanocaldococcus jannaschii (strain ATCC 43067 / DSM 2661 / JAL-1 / JCM 10045 / NBRC 100440) (Methanococcus jannaschii).